Consider the following 229-residue polypeptide: Adenosylcobinamide-GDP ribazoletransferase (229 aa).

6 helical membrane-spanning segments follow: residues 31–51 (AMLL…AVLA), 55–75 (AVEL…AASS), 111–131 (AGVL…ATLL), 134–154 (PLLA…VCCT), 176–196 (VAVL…LVLV), and 208–228 (GDVM…AWAA).

Belongs to the CobS family. Requires Mg(2+) as cofactor.

The protein resides in the cell membrane. It catalyses the reaction alpha-ribazole + adenosylcob(III)inamide-GDP = adenosylcob(III)alamin + GMP + H(+). The enzyme catalyses alpha-ribazole 5'-phosphate + adenosylcob(III)inamide-GDP = adenosylcob(III)alamin 5'-phosphate + GMP + H(+). It functions in the pathway cofactor biosynthesis; adenosylcobalamin biosynthesis; adenosylcobalamin from cob(II)yrinate a,c-diamide: step 7/7. In terms of biological role, joins adenosylcobinamide-GDP and alpha-ribazole to generate adenosylcobalamin (Ado-cobalamin). Also synthesizes adenosylcobalamin 5'-phosphate from adenosylcobinamide-GDP and alpha-ribazole 5'-phosphate. The sequence is that of Adenosylcobinamide-GDP ribazoletransferase from Nocardioides sp. (strain ATCC BAA-499 / JS614).